Consider the following 132-residue polypeptide: Ribosome-binding factor A (132 aa).

Belongs to the RbfA family. Monomer. Binds 30S ribosomal subunits, but not 50S ribosomal subunits or 70S ribosomes.

It localises to the cytoplasm. One of several proteins that assist in the late maturation steps of the functional core of the 30S ribosomal subunit. Associates with free 30S ribosomal subunits (but not with 30S subunits that are part of 70S ribosomes or polysomes). Required for efficient processing of 16S rRNA. May interact with the 5'-terminal helix region of 16S rRNA. This is Ribosome-binding factor A from Pasteurella multocida (strain Pm70).